Consider the following 321-residue polypeptide: MAVITKIDTFAAIGAGVIGSGWVARALANGLDVLAWDPAEDAEMQLRANVENAWPALERAGLAPGASPARLHFVPTIEACVADADFVQESAPEREALKLELHERISRAAKPDAIIASSTSGLLPTDFYARAHRPERCIVGHPFNPVYLLPLVEVLGGERTAPDTVDAALGIYRALGMRPLRVRKEVPGFIADRLLEALWREALHLVDEGVATTGEIDDAIRFGAGIRWSFMGTFLTYTLAGGEAGMRHFMQQFGPALELPWTKLVAPKLTDALIDRVVEGTAEQQGPRSIKALERYRDECITEVIAAIAAVKARHGMRYED.

14-19 contributes to the NAD(+) binding site; the sequence is GAGVIG.

Belongs to the 3-hydroxyacyl-CoA dehydrogenase family. L-carnitine dehydrogenase subfamily. In terms of assembly, homodimer.

Its subcellular location is the cytoplasm. It catalyses the reaction carnitine + NAD(+) = 3-dehydrocarnitine + NADH + H(+). The protein operates within amine and polyamine metabolism; carnitine metabolism. Functionally, catalyzes the NAD(+)-dependent oxidation of L-carnitine to 3-dehydrocarnitine. This chain is L-carnitine dehydrogenase, found in Burkholderia mallei (strain ATCC 23344).